A 114-amino-acid polypeptide reads, in one-letter code: UPF0102 protein HPG27_782 (114 aa).

Belongs to the UPF0102 family.

This is UPF0102 protein HPG27_782 from Helicobacter pylori (strain G27).